The chain runs to 312 residues: Malate dehydrogenase (312 aa).

NAD(+) is bound by residues 7–13 (GAAGGIG) and Asp34. Residues Arg81 and Arg87 each coordinate substrate. NAD(+)-binding positions include Asn94 and 117-119 (ITN). Substrate contacts are provided by Asn119 and Arg153. The active-site Proton acceptor is the His177. Met227 is an NAD(+) binding site.

The protein belongs to the LDH/MDH superfamily. MDH type 1 family. Homodimer.

It carries out the reaction (S)-malate + NAD(+) = oxaloacetate + NADH + H(+). Its function is as follows. Catalyzes the reversible oxidation of malate to oxaloacetate. The sequence is that of Malate dehydrogenase from Moritella marina (Vibrio marinus).